A 445-amino-acid polypeptide reads, in one-letter code: UPF0210 protein SMU_73 (445 aa).

The protein belongs to the UPF0210 family. As to quaternary structure, homodimer.

This Streptococcus mutans serotype c (strain ATCC 700610 / UA159) protein is UPF0210 protein SMU_73.